Here is a 409-residue protein sequence, read N- to C-terminus: Nucleoprotein (409 aa).

2 disordered regions span residues 1–84 (MASG…KGGR) and 121–194 (ADTK…DSGD). The span at 15–31 (PVIKLGGPKPPKVGSSG) shows a compositional bias: low complexity. The tract at residues 29 to 160 (SSGNASWFQA…GNFRWDFIPL (132 aa)) is RNA-binding. A CoV N NTD domain is found at 31-156 (GNASWFQAIK…GGPDGNFRWD (126 aa)). The segment covering 70 to 84 (YWRRQARFKPGKGGR) has biased composition (basic residues). Residues 162–179 (RGRSGRSTAASSAAASRA) show a composition bias toward low complexity. The segment covering 180-192 (PSREGSRGRRSDS) has biased composition (basic and acidic residues). A phosphoserine; by host mark is found at Ser190 and Ser192. Positions 215 to 331 (TKAKADEMAH…QCVDGVGTRP (117 aa)) constitute a CoV N CTD domain. Residues 226–333 (RYCKRTIPPN…VDGVGTRPKD (108 aa)) are dimerization. Cystine bridges form between Cys281-Cys308 and Cys320-Cys323. The tract at residues 327–396 (VGTRPKDDEP…QLEFYDEPKV (70 aa)) is disordered. Residues 358–367 (QRPKKEKKLK) are compositionally biased toward basic residues. The span at 368 to 384 (KQDDEADKALTSDEERN) shows a compositional bias: basic and acidic residues. Thr378 carries the post-translational modification Phosphothreonine; by host. The residue at position 379 (Ser379) is a Phosphoserine; by host.

Belongs to the gammacoronavirus nucleocapsid protein family. Homooligomer. Both monomeric and oligomeric forms interact with RNA. Interacts with protein M. Interacts with NSP3; this interaction serves to tether the genome to the newly translated replicase-transcriptase complex at a very early stage of infection. ADP-ribosylated. The ADP-ribosylation is retained in the virion during infection. Post-translationally, phosphorylated on serine and threonine residues.

It localises to the virion. The protein resides in the host endoplasmic reticulum-Golgi intermediate compartment. The protein localises to the host Golgi apparatus. Functionally, packages the positive strand viral genome RNA into a helical ribonucleocapsid (RNP) and plays a fundamental role during virion assembly through its interactions with the viral genome and membrane protein M. Plays an important role in enhancing the efficiency of subgenomic viral RNA transcription as well as viral replication. The sequence is that of Nucleoprotein from Gallus gallus (Chicken).